The primary structure comprises 1568 residues: MSQVEKVSILGSDSIHVGYGIQDHIVEETLTNLKSSTYVIITDSNMEATAPYQTLSSKFEAGLKEFRPESRLFYYAVSPGENNKSRETKAQVEDFLLQKGCTRDTVIIAVGGGVVGDMIGFVAATFMRGVRVVQVPTTLLAMVDSSIGGKTAVDTPLGKNFVGAFHQPKYVFVDVSFLTTLPTRQFINGMAEVVKTAAIWNEEEFTRLENFAKTFIAVVTSDNIDLATIKDDLVKTVLESIRVKADVVSADEKESSLRNLLNFGHTIGHAIEAIVTPQALHGECVAVGMVKEAELARYWGVLSPVAVARLVNCIAAYNLPTSVGDKIFVQRIGHKRHFIQINTLLEKMAIDKKNDGSKIRTVILEAIGKCYQLKAHEVSKQDLSFVLTDETLVHPFQEETTPKENVVIPPGSKSISNRALILAALGKGTVRIKNLLHSDDTKHMLAAVAALKGAEISTEDNGDTIVVKGNGGNFITCDEQLYLGNAGTASRFLTTVASLVNVNEQSNDYTVLTGNARMQERPVGPLVNALRANGSEIEYLNNEGSLPLKIKAGKGLKGGRVELAATISSQYVSSILMCAPYAEKEVTLALVGGKPISQLYIDMTIAMMKDFGISVTRDPHEEHTYHIPKGVYSNPGVYEVESDASSATYPLAFAAMTGTSCTVPNIGSSSLQGDARFAVDVLKPMGCTVEQTSTSTTVRGPSKGSLKPLTHVDMEPMTDAFLTASVVAAIANSSVPTQITGIANQRVKECNRILAMVDELAKFGVRAEELPDGIEIYGIDYKNLKVPSLENRGVCTYDDHRVAMSFSLLAGMCPEPVLITERSCTGKTWPGWWDVLHTKFGVELEGYEEPKDLNDPALLVNKEVNGDKSIVVIGMRAAGKSTLSRWIADFMGFELIDLDTVFEQTHGDIREYIKANGWGRFRELEAGIMKEYLTKCSSRHVISTGGGIVESEESRDILKSYTKTGGIVLHLHRDLDETIVFLSSDTTRPAYVSEIKDVWARREKWYHECSNYHFYSSHCGTEEEFKKLRHSFVSYLKTITGAGLSPVPKGRSFVLSLACSDLNDIAENLEDIVAGCEAIELRVDLLKDYSPSFVADQTAVLRKFVNLPIIYTIRTKGQGGNFPDEDVQALEQLSYLGIKLGVDYLDVQLSNSEKFVKSIIEKKAFTKIIATHIDLAGLPWTRAEWDNKYNQGISLNADVIQLVGFAHAFQDNIDLEQFRANHTITPLIAFNAGEHGKLSRVLNRTLTPVTSELLSNVSGNGQLTVGEINRCFSEIGGLSRRNFYIVGNPISHSRSPQLHTAGYEKLNLPHRFSKFETDYAQKVYEEVMTKPGFGGLAVTIPLKLDIMKYVSELSESAKIIGAVNTVTPLDGQPGKFYGDNTDWYGITQSFVRHGVPSFGNSSVNGMVVGGGGTSRAAAFALHQMGCKKIYMVNRTTSKLHEIKSSLPSDFNIEVLETVDQVEAADPVSLVVSCVPADKPLDSELLNKVERILYHGKNQEKRSFVPTLLDAAYKPRVTPIMKIAEEKFGWAVVPGVEMLVNQGVLQFKVHTVFTPPYKNVYEAVVDDNV.

Positions 1–380 are 3-dehydroquinate synthase; sequence MSQVEKVSIL…YQLKAHEVSK (380 aa). NAD(+) contacts are provided by residues 43 to 45, 81 to 84, 112 to 114, and aspartate 117; these read DSN, ENNK, and GGV. Arginine 128 is a binding site for 7-phospho-2-dehydro-3-deoxy-D-arabino-heptonate. 137 to 138 lines the NAD(+) pocket; the sequence is TT. The 7-phospho-2-dehydro-3-deoxy-D-arabino-heptonate site is built by aspartate 144 and lysine 150. Lysine 159 contributes to the NAD(+) binding site. Asparagine 160 lines the 7-phospho-2-dehydro-3-deoxy-D-arabino-heptonate pocket. NAD(+) contacts are provided by residues 177–180 and asparagine 188; that span reads FLTT. Glutamate 192 serves as a coordination point for Zn(2+). 7-phospho-2-dehydro-3-deoxy-D-arabino-heptonate is bound by residues 192–195 and lysine 244; that span reads EVVK. Glutamate 254 serves as the catalytic Proton acceptor; for 3-dehydroquinate synthase activity. 7-phospho-2-dehydro-3-deoxy-D-arabino-heptonate contacts are provided by residues 258–262 and histidine 265; that span reads RNLLN. Histidine 265 contacts Zn(2+). Residue histidine 269 is the Proton acceptor; for 3-dehydroquinate synthase activity of the active site. 7-phospho-2-dehydro-3-deoxy-D-arabino-heptonate is bound by residues histidine 281 and lysine 352. Histidine 281 is a binding site for Zn(2+). The EPSP synthase stretch occupies residues 393-842; sequence VHPFQEETTP…WDVLHTKFGV (450 aa). The active-site For EPSP synthase activity is the cysteine 824. The tract at residues 867 to 1056 is shikimate kinase; the sequence is DKSIVVIGMR…VPKGRSFVLS (190 aa). Residue 874-881 participates in ATP binding; sequence GMRAAGKS. The interval 1057 to 1267 is 3-dehydroquinase; sequence LACSDLNDIA…SGNGQLTVGE (211 aa). The interval 1280-1568 is shikimate dehydrogenase; that stretch reads RRNFYIVGNP…VYEAVVDDNV (289 aa).

This sequence in the N-terminal section; belongs to the sugar phosphate cyclases superfamily. Dehydroquinate synthase family. The protein in the 2nd section; belongs to the EPSP synthase family. It in the 3rd section; belongs to the shikimate kinase family. In the 4th section; belongs to the type-I 3-dehydroquinase family. This sequence in the C-terminal section; belongs to the shikimate dehydrogenase family. Homodimer. The cofactor is Zn(2+).

The protein localises to the cytoplasm. The enzyme catalyses 7-phospho-2-dehydro-3-deoxy-D-arabino-heptonate = 3-dehydroquinate + phosphate. It catalyses the reaction 3-dehydroquinate = 3-dehydroshikimate + H2O. The catalysed reaction is shikimate + NADP(+) = 3-dehydroshikimate + NADPH + H(+). It carries out the reaction shikimate + ATP = 3-phosphoshikimate + ADP + H(+). The enzyme catalyses 3-phosphoshikimate + phosphoenolpyruvate = 5-O-(1-carboxyvinyl)-3-phosphoshikimate + phosphate. It participates in metabolic intermediate biosynthesis; chorismate biosynthesis; chorismate from D-erythrose 4-phosphate and phosphoenolpyruvate: step 2/7. The protein operates within metabolic intermediate biosynthesis; chorismate biosynthesis; chorismate from D-erythrose 4-phosphate and phosphoenolpyruvate: step 3/7. Its pathway is metabolic intermediate biosynthesis; chorismate biosynthesis; chorismate from D-erythrose 4-phosphate and phosphoenolpyruvate: step 4/7. It functions in the pathway metabolic intermediate biosynthesis; chorismate biosynthesis; chorismate from D-erythrose 4-phosphate and phosphoenolpyruvate: step 5/7. It participates in metabolic intermediate biosynthesis; chorismate biosynthesis; chorismate from D-erythrose 4-phosphate and phosphoenolpyruvate: step 6/7. The AROM polypeptide catalyzes 5 consecutive enzymatic reactions in prechorismate polyaromatic amino acid biosynthesis. This chain is Pentafunctional AROM polypeptide, found in Clavispora lusitaniae (strain ATCC 42720) (Yeast).